The primary structure comprises 150 residues: Viral late gene transcription factor 2 (150 aa).

This sequence belongs to the orthopoxvirus VLTF-2/OPG126 family. As to quaternary structure, interacts with itself. Interacts with the late transcription factors VLTF-1/OPG093.

Its function is as follows. Acts with RNA polymerase to initiate transcription from late gene promoters. This Vaccinia virus (strain Copenhagen) (VACV) protein is Viral late gene transcription factor 2 (OPG126).